Reading from the N-terminus, the 466-residue chain is Fumarate hydratase class II (466 aa).

Substrate is bound by residues 100–102 (SGT), Arg128, 131–134 (HPND), 141–143 (STN), and Thr189. The active-site Proton donor/acceptor is His190. The active site involves Ser320. Substrate contacts are provided by residues Ser321 and 326–328 (KVN).

The protein belongs to the class-II fumarase/aspartase family. Fumarase subfamily. In terms of assembly, homotetramer.

It is found in the cytoplasm. It carries out the reaction (S)-malate = fumarate + H2O. The protein operates within carbohydrate metabolism; tricarboxylic acid cycle; (S)-malate from fumarate: step 1/1. Functionally, involved in the TCA cycle. Catalyzes the stereospecific interconversion of fumarate to L-malate. The chain is Fumarate hydratase class II from Prochlorococcus marinus (strain MIT 9313).